The sequence spans 196 residues: 3-isopropylmalate dehydratase small subunit (196 aa).

This sequence belongs to the LeuD family. LeuD type 1 subfamily. As to quaternary structure, heterodimer of LeuC and LeuD.

The catalysed reaction is (2R,3S)-3-isopropylmalate = (2S)-2-isopropylmalate. It participates in amino-acid biosynthesis; L-leucine biosynthesis; L-leucine from 3-methyl-2-oxobutanoate: step 2/4. Functionally, catalyzes the isomerization between 2-isopropylmalate and 3-isopropylmalate, via the formation of 2-isopropylmaleate. In Corynebacterium diphtheriae (strain ATCC 700971 / NCTC 13129 / Biotype gravis), this protein is 3-isopropylmalate dehydratase small subunit.